We begin with the raw amino-acid sequence, 200 residues long: GTP cyclohydrolase-2 (200 aa).

Residue 49–53 (RVHSE) coordinates GTP. Cys-54, Cys-65, and Cys-67 together coordinate Zn(2+). Residues Gln-70, 92–94 (EGR), and Thr-114 contribute to the GTP site. Residue Asp-126 is the Proton acceptor of the active site. Residue Arg-128 is the Nucleophile of the active site. GTP contacts are provided by Thr-149 and Lys-154.

It belongs to the GTP cyclohydrolase II family. In terms of assembly, homodimer. The cofactor is Zn(2+).

It catalyses the reaction GTP + 4 H2O = 2,5-diamino-6-hydroxy-4-(5-phosphoribosylamino)-pyrimidine + formate + 2 phosphate + 3 H(+). It participates in cofactor biosynthesis; riboflavin biosynthesis; 5-amino-6-(D-ribitylamino)uracil from GTP: step 1/4. Functionally, catalyzes the conversion of GTP to 2,5-diamino-6-ribosylamino-4(3H)-pyrimidinone 5'-phosphate (DARP), formate and pyrophosphate. In Klebsiella pneumoniae (strain 342), this protein is GTP cyclohydrolase-2.